We begin with the raw amino-acid sequence, 423 residues long: Serine--tRNA ligase (423 aa).

231–233 (TGE) serves as a coordination point for L-serine. Position 262–264 (262–264 (RSE)) interacts with ATP. Position 285 (Glu-285) interacts with L-serine. 349-352 (EISS) contacts ATP. Ser-385 provides a ligand contact to L-serine.

This sequence belongs to the class-II aminoacyl-tRNA synthetase family. Type-1 seryl-tRNA synthetase subfamily. Homodimer. The tRNA molecule binds across the dimer.

It localises to the cytoplasm. The enzyme catalyses tRNA(Ser) + L-serine + ATP = L-seryl-tRNA(Ser) + AMP + diphosphate + H(+). It carries out the reaction tRNA(Sec) + L-serine + ATP = L-seryl-tRNA(Sec) + AMP + diphosphate + H(+). It functions in the pathway aminoacyl-tRNA biosynthesis; selenocysteinyl-tRNA(Sec) biosynthesis; L-seryl-tRNA(Sec) from L-serine and tRNA(Sec): step 1/1. Its function is as follows. Catalyzes the attachment of serine to tRNA(Ser). Is also able to aminoacylate tRNA(Sec) with serine, to form the misacylated tRNA L-seryl-tRNA(Sec), which will be further converted into selenocysteinyl-tRNA(Sec). The chain is Serine--tRNA ligase from Coxiella burnetii (strain CbuG_Q212) (Coxiella burnetii (strain Q212)).